The sequence spans 607 residues: Synaptotagmin-like protein 3 (607 aa).

Residues 4-123 (EVDLESFKEL…IKTGEWFFEE (120 aa)) form the RabBD domain. The interval 221-279 (VGHTERRSQSDTAVNVTSRKASTPDILKAFHQEDPKHPPDPVLKQDTPPSSPTHSAVFS) is disordered. Residues 230–241 (SDTAVNVTSRKA) show a composition bias toward polar residues. Positions 248–259 (KAFHQEDPKHPP) are enriched in basic and acidic residues. C2 domains lie at 305-430 (VTGE…ARWY) and 458-590 (LPAG…LQWH).

Monomer. Binds NRXN1. Binds RAB27A that has been activated by GTP-binding via its N-terminus. As to expression, highly expressed in spleen and lung. Detected at lower levels in heart and testis.

Its subcellular location is the endomembrane system. Its function is as follows. May act as Rab effector protein and play a role in vesicle trafficking. Binds phospholipids in the presence of calcium ions. The polypeptide is Synaptotagmin-like protein 3 (Sytl3) (Mus musculus (Mouse)).